A 185-amino-acid chain; its full sequence is NOP protein chaperone 1 (185 aa).

A phosphoserine mark is found at serine 34, serine 66, and serine 177. Residues 121–185 (SRSDSKEEDS…DSPASKKKKQ (65 aa)) form a disordered region.

In terms of assembly, interacts with NOP58, RUVBL1 and RUVBL2; the interactions are direct and NOPCHAP1 bridges the association of NOP58 with RUVBL1:RUVBL2 even in absence of snoRNAs. The interactions with RUVBL1 and RUVBL2 are disrupted upon ATP binding.

The protein localises to the nucleus. Its function is as follows. Client-loading PAQosome/R2TP complex cofactor that selects NOP58 to promote box C/D small nucleolar ribonucleoprotein (snoRNP) assembly. Acts as a bridge between NOP58 and the R2TP complex via RUVBL1:RUVBL2. This chain is NOP protein chaperone 1, found in Mus musculus (Mouse).